Consider the following 319-residue polypeptide: L-lactate dehydrogenase (319 aa).

NAD(+) is bound by residues Val-17, Asp-38, Lys-43, Tyr-69, and 83–84 (GA). Residues Gln-86, Arg-92, and 124–127 (NPVD) each bind substrate. NAD(+) is bound by residues 122-124 (ATN) and Ser-147. Residue 152-155 (DTAR) coordinates substrate. Positions 157 and 172 each coordinate beta-D-fructose 1,6-bisphosphate. Residue His-179 is the Proton acceptor of the active site. The residue at position 224 (Tyr-224) is a Phosphotyrosine. Thr-233 contacts substrate.

This sequence belongs to the LDH/MDH superfamily. LDH family. In terms of assembly, homotetramer.

It localises to the cytoplasm. The catalysed reaction is (S)-lactate + NAD(+) = pyruvate + NADH + H(+). Its pathway is fermentation; pyruvate fermentation to lactate; (S)-lactate from pyruvate: step 1/1. Its activity is regulated as follows. Allosterically activated by fructose 1,6-bisphosphate (FBP). Catalyzes the conversion of lactate to pyruvate. This chain is L-lactate dehydrogenase, found in Bacillus licheniformis (strain ATCC 14580 / DSM 13 / JCM 2505 / CCUG 7422 / NBRC 12200 / NCIMB 9375 / NCTC 10341 / NRRL NRS-1264 / Gibson 46).